A 401-amino-acid chain; its full sequence is MTALDRRYDTQIHRRVTRTVMVGSVPIGSEHPIAVQSMINEDTLDIDGSVAGIIRLVDAGCEIVRVTTPSIGHAKAMGKIKAELSAKGCNVPLVADVHHNGTKIALEVAQHVDKVRINPGLFVFDKPDPNRQEFTESEFAEIGTRIRETFEPLVKLLREQNKALRIGVNHGSLAERMLFTYGDTPKGMVESAMEFVRICDDLDFHNIVISMKASRAPVMLSAYRLMADTMDQEGFNYPLHLGVTEAGDGDYGRIKSTAGIATLLAEGLGDTIRVSLTEAPEKEIPVCYSILQSLGLRKTMVEYIACPSCGRTLFNLEDVLHKVRNATSHLKGLDIAVMGCIVNGPGEMADADYGYVGKGPGIIALYRGREEIRKVPEKEGVQALIQLIQEDGLWVDPDETR.

[4Fe-4S] cluster-binding residues include Cys306, Cys309, Cys340, and Glu347.

It belongs to the IspG family. It depends on [4Fe-4S] cluster as a cofactor.

The catalysed reaction is (2E)-4-hydroxy-3-methylbut-2-enyl diphosphate + 2 oxidized [2Fe-2S]-[ferredoxin] + H2O = 2-C-methyl-D-erythritol 2,4-cyclic diphosphate + 2 reduced [2Fe-2S]-[ferredoxin] + H(+). It participates in isoprenoid biosynthesis; isopentenyl diphosphate biosynthesis via DXP pathway; isopentenyl diphosphate from 1-deoxy-D-xylulose 5-phosphate: step 5/6. Functionally, converts 2C-methyl-D-erythritol 2,4-cyclodiphosphate (ME-2,4cPP) into 1-hydroxy-2-methyl-2-(E)-butenyl 4-diphosphate. The protein is 4-hydroxy-3-methylbut-2-en-1-yl diphosphate synthase (ferredoxin) of Synechococcus sp. (strain CC9902).